The chain runs to 314 residues: Glycerate dehydrogenase (314 aa).

Residues Thr-74, 157–158, 228–230, and Asp-254 each bind NAD(+); these read AL and TAR. The active site involves Arg-230. Glu-259 is an active-site residue. His-280 (proton donor) is an active-site residue. 280 to 283 lines the NAD(+) pocket; it reads HVAW.

It belongs to the D-isomer specific 2-hydroxyacid dehydrogenase family. In terms of assembly, homodimer.

The protein localises to the cytoplasm. The enzyme catalyses (R)-glycerate + NAD(+) = 3-hydroxypyruvate + NADH + H(+). The protein operates within one-carbon metabolism; formaldehyde assimilation via serine pathway. Functionally, plays a central role in assimilation of carbon. It converts hydroxypyruvate to glycerate as a key step in the serine cycle, and may also play an important role in C2 reactions, by interconverting glyoxylate and glycolate. The polypeptide is Glycerate dehydrogenase (hprA) (Methylorubrum extorquens (strain ATCC 14718 / DSM 1338 / JCM 2805 / NCIMB 9133 / AM1) (Methylobacterium extorquens)).